Here is a 238-residue protein sequence, read N- to C-terminus: Ubiquitin-conjugating enzyme E2 R2 (238 aa).

The UBC core domain occupies 8–174 (SSQKALMLEL…IRKQVSATKA (167 aa)). The active-site Glycyl thioester intermediate is Cys93. The tract at residues 98–113 (HPPVDDPQSGELPSER) is important for ubiquitin transfer. The tract at residues 194 to 238 (TKVPSNDNSSDLLYDDLYDDDIDDEDEEEEDADCYDDDDSGNEES) is disordered. Residues 206–238 (LYDDLYDDDIDDEDEEEEDADCYDDDDSGNEES) show a composition bias toward acidic residues. Ser233 bears the Phosphoserine; by CK2 mark.

The protein belongs to the ubiquitin-conjugating enzyme family. As to quaternary structure, interacts with multiple Cul1-RING E3 ubiquitin-protein ligase complexes, also known as SCF (SKP1-CUL1-F-box protein) complexes, including SCF(FBXW7) and SCF(BTRC). Interacts with multiple Cul2-RING (CRL2) E3 ubiquitin-protein ligase complexes, also known as ECS (Elongin BC-CUL2/5-SOCS-box protein) complexes, including CRL2(FEM1C) and ECS(VHL). When phosphorylated, interacts with beta-TrCP (BTRC).

It carries out the reaction S-ubiquitinyl-[E1 ubiquitin-activating enzyme]-L-cysteine + [E2 ubiquitin-conjugating enzyme]-L-cysteine = [E1 ubiquitin-activating enzyme]-L-cysteine + S-ubiquitinyl-[E2 ubiquitin-conjugating enzyme]-L-cysteine.. It participates in protein modification; protein ubiquitination. With respect to regulation, neddylation of CUL2 in the CRL2(FEM1C) E3 ligase complex increases substrate affinity of UBE2R2 and the ubiquitin-transfer rate in the E2-E3 complex. Functionally, E2 ubiquitin-conjugating enzyme that accepts ubiquitin from an E1 ubiquitin-activating protein, and catalyzes its covalent attachment to other proteins by an E3 ubiquitin-protein ligase complex. In vitro catalyzes monoubiquitination and 'Lys-48'-linked polyubiquitination. Works in collaboration with various Cul1-RING and Cul2-RING E3 ligase complexes. May be involved in degradation of katenin. The polypeptide is Ubiquitin-conjugating enzyme E2 R2 (UBE2R2) (Homo sapiens (Human)).